A 727-amino-acid polypeptide reads, in one-letter code: 1,4-alpha-glucan branching enzyme GlgB (727 aa).

The Nucleophile role is filled by D405. Residue E458 is the Proton donor of the active site.

It belongs to the glycosyl hydrolase 13 family. GlgB subfamily. As to quaternary structure, monomer.

It carries out the reaction Transfers a segment of a (1-&gt;4)-alpha-D-glucan chain to a primary hydroxy group in a similar glucan chain.. The protein operates within glycan biosynthesis; glycogen biosynthesis. Its function is as follows. Catalyzes the formation of the alpha-1,6-glucosidic linkages in glycogen by scission of a 1,4-alpha-linked oligosaccharide from growing alpha-1,4-glucan chains and the subsequent attachment of the oligosaccharide to the alpha-1,6 position. The sequence is that of 1,4-alpha-glucan branching enzyme GlgB from Yersinia enterocolitica serotype O:8 / biotype 1B (strain NCTC 13174 / 8081).